The primary structure comprises 498 residues: Ammonium transporter 3 member 1 (498 aa).

11 helical membrane passes run 33 to 53 (ISAT…YGSI), 58 to 78 (WAVN…LCWV), 143 to 163 (MVYF…GSLL), 171 to 191 (WMLF…FSLW), 206 to 226 (GGYV…YWVG), 241 to 261 (VLLM…FNGG), 276 to 296 (NTNI…VIFF), 301 to 321 (VIGA…GAGL), 325 to 345 (WAAI…MMVV), 369 to 389 (GFLG…SLFL), and 412 to 432 (VAGA…VCLA). The tract at residues 478–498 (DNNDTHHNNNKAAPSGVTQNV) is disordered. The span at 487–498 (NKAAPSGVTQNV) shows a compositional bias: polar residues.

This sequence belongs to the ammonia transporter channel (TC 1.A.11.2) family. As to expression, expressed in root.

Its subcellular location is the membrane. Involved in ammonium transport. The protein is Ammonium transporter 3 member 1 (AMT3-1) of Oryza sativa subsp. japonica (Rice).